The chain runs to 222 residues: N-(5'-phosphoribosyl)anthranilate isomerase (222 aa).

The protein belongs to the TrpF family.

The catalysed reaction is N-(5-phospho-beta-D-ribosyl)anthranilate = 1-(2-carboxyphenylamino)-1-deoxy-D-ribulose 5-phosphate. The protein operates within amino-acid biosynthesis; L-tryptophan biosynthesis; L-tryptophan from chorismate: step 3/5. The sequence is that of N-(5'-phosphoribosyl)anthranilate isomerase from Beijerinckia indica subsp. indica (strain ATCC 9039 / DSM 1715 / NCIMB 8712).